Here is a 336-residue protein sequence, read N- to C-terminus: Isethionate-binding periplasmic protein DctP (336 aa).

A signal peptide spans 1–23 (MKHLLKAGALVALACIVTLTAGA).

It belongs to the bacterial solute-binding protein 7 family. In terms of assembly, the complex comprises the periplasmic solute receptor protein DctP, and the fused transmembrane protein DctMQ.

It localises to the periplasm. The enzyme catalyses 2-hydroxyethane-1-sulfonate(out) + Na(+)(out) = 2-hydroxyethane-1-sulfonate(in) + Na(+)(in). The protein operates within organosulfur degradation; alkanesulfonate degradation. Functionally, part of the tripartite ATP-independent periplasmic (TRAP) transport system DctPQM involved in the uptake of isethionate (2-hydroxyethanesulfonate), which is then catabolized by enzymes encoded by adjacent genes in the locus. The DctP subunit is the solute-binding protein. Thereby is involved in an anaerobic respiration pathway that converts the sulfonate isethionate to ammonia, acetate and sulfide. The chain is Isethionate-binding periplasmic protein DctP from Oleidesulfovibrio alaskensis (strain ATCC BAA-1058 / DSM 17464 / G20) (Desulfovibrio alaskensis).